The chain runs to 2227 residues: Genome polyprotein (2227 aa).

2 short sequence motifs ((L)YPX(n)L motif) span residues 167–171 (YPHGL) and 200–205 (YPVWEL). Residues 766-836 (MMSRIAAGDL…PRKMKGLFSQ (71 aa)) form an involved in P1-2A pentamerization region. The helical transmembrane segment at 1010 to 1030 (VTVEIINTVLCFVKSGILLYV) threads the bilayer. Residues 1043–1070 (IGLLRVMNYADIGCSVISCGKVFSKMLE) form a membrane-penetrating ability region. Residues 1127–1152 (KKKDVLNVLKDNQQKIERAIEEADNF) are a coiled coil. The 163-residue stretch at 1204–1366 (HQKLKNLGSI…SFFKNPHNDM (163 aa)) folds into the SF3 helicase domain. Residue 1230–1237 (GKRGGGKS) coordinates ATP. Residues 1462-1482 (WVAVGAAVGILGVLVGGWFVY) form a helical membrane-spanning segment. Residue Tyr-1499 is modified to O-(5'-phospho-RNA)-tyrosine. A Peptidase C3 domain is found at 1514–1728 (DPVESQSTLE…VAKLVTQEMF (215 aa)). Residues His-1563, Asp-1603, and Cys-1691 each act as for protease 3C activity in the active site. Positions 1976 to 2097 (DVGLDLDFSA…VFSRDIQIDN (122 aa)) constitute a RdRp catalytic domain. Catalysis depends on Asp-2083, which acts as the For RdRp activity.

Belongs to the picornaviridae polyprotein family. In terms of assembly, homodimer. Homomultimer; probably interacts with membranes in a multimeric form. Seems to assemble into amyloid-like fibers. As to quaternary structure, homodimer. Monomer. Interacts with protein 3CD. Interacts with host ACBD3. In terms of assembly, interacts with protein 3AB. As to quaternary structure, interacts with human MAVS. Homodimer; disulfide-linked. In terms of assembly, homopentamer. Homooligomer. As to quaternary structure, interacts with capsid protein VP2. Interacts with capsid protein VP3. Interacts with capsid protein VP1. Interacts with capsid protein VP3. In terms of assembly, interacts with capsid protein VP1. Interacts with capsid protein VP2. Post-translationally, specific enzymatic cleavages by viral protease in vivo yield a variety of precursors and mature proteins. Polyprotein processing intermediates are produced, such as P1-2A which is a functional precursor of the structural proteins, VP0 which is a VP4-VP2 precursor, VP1-2A precursor, 3ABC precursor which is a stable and catalytically active precursor of 3A, 3B and 3C proteins, 3AB and 3CD precursors. The assembly signal 2A is removed from VP1-2A by a host protease, possibly host Cathepsin L. This cleavage occurs over a region of 3 amino-acids probably generating VP1 proteins with heterogeneous C-termini. During virion maturation, immature virions are rendered infectious following cleavage of VP0 into VP4 and VP2. This maturation seems to be an autocatalytic event triggered by the presence of RNA in the capsid and is followed by a conformational change of the particle. In terms of processing, the assembly signal 2A is removed from VP1-2A by a host protease, possibly host Cathepsin L in naked virions. This cleavage does not occur in enveloped virions. This cleavage occurs over a region of 3 amino-acids probably generating VP1 proteins with heterogeneous C-termini. Post-translationally, VPg is uridylylated prior to priming replication into VPg-pUpU. Unlike other picornaviruses, does not seem to be myristoylated.

It localises to the virion. The protein resides in the host endosome. Its subcellular location is the host multivesicular body. It is found in the host membrane. The protein localises to the host mitochondrion outer membrane. It localises to the host cytoplasm. The protein resides in the host cytoplasmic vesicle membrane. It carries out the reaction RNA(n) + a ribonucleoside 5'-triphosphate = RNA(n+1) + diphosphate. The catalysed reaction is a ribonucleoside 5'-triphosphate + H2O = a ribonucleoside 5'-diphosphate + phosphate + H(+). It catalyses the reaction Selective cleavage of Gln-|-Gly bond in the poliovirus polyprotein. In other picornavirus reactions Glu may be substituted for Gln, and Ser or Thr for Gly.. In terms of biological role, capsid proteins VP1, VP2, and VP3 form a closed capsid enclosing the viral positive strand RNA genome. All these proteins contain a beta-sheet structure called beta-barrel jelly roll. Together they form an icosahedral capsid (T=3) composed of 60 copies of each VP1, VP2, and VP3, with a diameter of approximately 300 Angstroms. VP1 is situated at the 12 fivefold axes, whereas VP2 and VP3 are located at the quasi-sixfold axes. The naked capsid interacts with the host receptor HAVCR1 to provide virion attachment to and probably entry into the target cell. Functionally, VP0 precursor is a component of the immature procapsids. Plays a role in the assembly of the 12 pentamers into an icosahedral structure. Has not been detected in mature virions, supposedly owing to its small size. Its function is as follows. Precursor component of immature procapsids that corresponds to an extended form of the structural protein VP1. After maturation, possibly by the host Cathepsin L, the assembly signal 2A is cleaved to give rise to the mature VP1 protein. In terms of biological role, functions as a viroporin. Affects membrane integrity and causes an increase in membrane permeability. Involved in host intracellular membrane rearrangements probably to give rise to the viral factories. Does not disrupt calcium homeostasis or glycoprotein trafficking. Antagonizes the innate immune response of the host by suppressing IFN-beta synthesis, which it achieves by interfering with the RIG-I/IFIH1 pathway. Functionally, affects membrane integrity and causes an increase in membrane permeability. Associates with and induces structural rearrangements of intracellular membranes. Displays RNA-binding activity. Its function is as follows. The precursor 3ABC is targeted to the mitochondrial membrane where protease 3C activity cleaves and inhibits the host antiviral protein MAVS, thereby disrupting activation of IRF3 through the IFIH1/MDA5 pathway. In vivo, the protease activity of 3ABC precursor is more efficient in cleaving the 2BC precursor than that of protein 3C. The 3ABC precursor may therefore play a role in the proteolytic processing of the polyprotein. Possible viroporin. In terms of biological role, interacts with the 3CD precursor and with RNA structures found at both the 5'- and 3'-termini of the viral genome. Since the 3AB precursor contains the hydrophobic domain 3A, it probably anchors the whole viral replicase complex to intracellular membranes on which viral RNA synthesis occurs. Functionally, may serve as membrane anchor to the 3AB and 3ABC precursors via its hydrophobic domain. May interact with RNA. Acts as a primer for viral RNA replication and remains covalently bound to viral genomic RNA. VPg is uridylylated prior to priming replication into VPg-pUpU. The VPg-pUpU is then used as primer on the genomic RNA poly(A) by the RNA-dependent RNA polymerase to replicate the viral genome. Its function is as follows. Cysteine protease that generates mature viral proteins from the precursor polyprotein. In addition to its proteolytic activity, it binds to viral RNA, and thus influences viral genome replication. RNA and substrate bind cooperatively to the protease. Cleaves IKBKG/NEMO to impair innate immune signaling. Cleaves host PABPC1 which may participate in the switch of viral translation to RNA synthesis. In terms of biological role, interacts with the 3AB precursor and with RNA structures found at both the 5'- and 3'-termini of the viral genome. Disrupts TLR3 signaling by degrading the host adapter protein TICAM1/TRIF. Functionally, RNA-directed RNA polymerase 3D-POL replicates genomic and antigenomic RNA by recognizing replications specific signals. This Human hepatitis A virus genotype IIB (isolate SLF88) (HHAV) protein is Genome polyprotein.